The chain runs to 706 residues: Phosphatase and actin regulator 4 (706 aa).

An RPEL 1 repeat occupies 42–67; sequence EVLERKISMRKPREELVKRGLLVEVP. Disordered stretches follow at residues 65–123, 196–380, 385–404, and 459–579; these read EVPE…QPCA, VHPR…HIPV, VPML…QSAS, and LKVP…REEW. Residues 106-121 show a composition bias toward polar residues; sequence DSTGSRPKSGETTVQP. Over residues 200 to 211 the composition is skewed to basic and acidic residues; the sequence is HLSEKNSEKYRP. Residues 266–276 are compositionally biased toward polar residues; that stretch reads DPSTRQQSSVP. The span at 290-299 shows a compositional bias: pro residues; it reads KQPPVPPPKP. 3 stretches are compositionally biased toward acidic residues: residues 463-476, 508-523, and 531-541; these read DDDD…DESL, QEEE…DTDS, and EDDEEEEEEET. Basic and acidic residues predominate over residues 563 to 579; that stretch reads GPHDSNPEFPQRSREEW. RPEL repeat units follow at residues 588–613 and 625–650; these read SQLN…QKNE and RRLT…RFNE.

It belongs to the phosphatase and actin regulator family. Binds ppp1ca and actin.

It localises to the cytoplasm. The protein resides in the cell projection. Its subcellular location is the lamellipodium. Regulator of protein phosphatase 1 (PP1) required for neural tube and optic fissure closure, and enteric neural crest cell (ENCCs) migration during development. Acts as an activator of PP1. During neural tube closure, localizes to the ventral neural tube and activates PP1, leading to down-regulate cell proliferation within cranial neural tissue and the neural retina. Also acts as a regulator of migration of enteric neural crest cells (ENCCs) by activating PP1, leading to repression of the integrin signaling through the rho/rock pathway. This chain is Phosphatase and actin regulator 4 (phactr4), found in Xenopus tropicalis (Western clawed frog).